The following is a 298-amino-acid chain: Troponin T, cardiac muscle (298 aa).

Positions 1–70 are enriched in acidic residues; the sequence is MSDIEEVVEE…EAKEAEDGPM (70 aa). 2 disordered regions span residues 1–95 and 120–219; these read MSDI…GERV and FENR…EKKK. Serine 2 carries the post-translational modification N-acetylserine. Serine 2 is modified (phosphoserine; by CK2). 2 stretches are compositionally biased toward basic and acidic residues: residues 120–183 and 203–219; these read FENR…DEAR and QTER…EKKK. Residue threonine 204 is modified to Phosphothreonine; by PKC/PRKCA. Position 208 is a phosphoserine; by PKC/PRKCA (serine 208). Position 213 is a phosphothreonine; by PKC/PRKCA and RAF1 (threonine 213). Position 294 is a phosphothreonine; by PKC/PRKCA (threonine 294).

It belongs to the troponin T family. Phosphorylation at Thr-213 by PRKCA induces significant reduction in myofilament calcium sensitivity and actomyosin ATPase activity. As to expression, heart. The fetal heart shows a greater expression in the atrium than in the ventricle, while the adult heart shows a greater expression in the ventricle than in the atrium. Isoform 6 predominates in normal adult heart. Isoforms 1, 7 and 8 are expressed in fetal heart. Isoform 7 is also expressed in failing adult heart.

Functionally, troponin T is the tropomyosin-binding subunit of troponin, the thin filament regulatory complex which confers calcium-sensitivity to striated muscle actomyosin ATPase activity. The polypeptide is Troponin T, cardiac muscle (TNNT2) (Homo sapiens (Human)).